The following is a 947-amino-acid chain: Serine-aspartate repeat-containing protein C (947 aa).

The first 50 residues, 1-50, serve as a signal peptide directing secretion; the sequence is MNNKKTATNRKGMIPNRLNKFSIRKYSVGTASILVGTTLIFGLSGHEAKA. Positions 21-32 match the YSIRK-G/S signaling motif motif; the sequence is FSIRKYSVGTAS. Positions 51–164 are disordered; that stretch reads AEHTNGELNQ…STTPKTTTIK (114 aa). Positions 51-495 are ligand binding A region; it reads AEHTNGELNQ…GSSTANGDQK (445 aa). Residues 56 to 71 show a composition bias toward polar residues; it reads GELNQSKNETTAPSEN. A compositionally biased stretch (basic and acidic residues) spans 72 to 83; the sequence is KTTKKVDSRQLK. Residues 84–155 show a composition bias toward polar residues; that stretch reads DNTQTATADQ…SNLTQAKDVS (72 aa). CNA-B domains are found at residues 496–606 and 607–717; these read KYNL…YKTP and KYSL…EEET. A disordered region spans residues 678-927; the sequence is TQTGTNTTED…NNSNNGTLFG (250 aa). 2 stretches are compositionally biased toward acidic residues: residues 685–695 and 712–886; these read TEDDKDADGGE and YYEE…DSDS. Positions 910–914 match the LPXTG sorting signal motif; sequence LPETG. Positions 912–927 are enriched in low complexity; it reads ETGSENNNSNNGTLFG. A Pentaglycyl murein peptidoglycan amidated threonine modification is found at T913. Positions 914–947 are cleaved as a propeptide — removed by sortase; it reads GSENNNSNNGTLFGGLFAALGSLLLFGRRKKQNK.

Belongs to the serine-aspartate repeat-containing protein (SDr) family. As to quaternary structure, homodimerizes; via N2-Domain. Interacts with host NRXN1; this interaction mediates bacterial attachment to host cells.

It localises to the secreted. Its subcellular location is the cell wall. Functionally, cell surface-associated calcium-binding protein which plays an important role in adhesion and pathogenesis. Mediates interactions with components of the extracellular matrix such as host NRXN1 to promote bacterial adhesion. The polypeptide is Serine-aspartate repeat-containing protein C (sdrC) (Staphylococcus aureus (strain Newman)).